Here is a 51-residue protein sequence, read N- to C-terminus: Probable antitoxin PhoAT (51 aa).

Belongs to the PhoAT antitoxin family. Interacts with toxin PhoH2.

Antitoxin component of a type II toxin-antitoxin (TA) system. The cognate antitoxin is PhoAT; the toxin gene cannot be expressed in the absence of the antitoxin gene in M.smegmatis (strain mc(2)4517), and abrogates the toxic effects of PhoH2 in M.smegmatis strain mc(2)155. In Mycobacterium tuberculosis (strain ATCC 25618 / H37Rv), this protein is Probable antitoxin PhoAT.